A 397-amino-acid polypeptide reads, in one-letter code: F-box protein At3g28330 (397 aa).

The 51-residue stretch at 6–56 (KKDMDFLTEDLWEIILARLPLKSIITTPKLVCKVWKSIIESRCFRDLFQSL) folds into the F-box domain.

This chain is F-box protein At3g28330, found in Arabidopsis thaliana (Mouse-ear cress).